Reading from the N-terminus, the 281-residue chain is Shikimate dehydrogenase (NADP(+)) (281 aa).

Residues 15–17 (SKS) and Thr-62 each bind shikimate. Lys-66 (proton acceptor) is an active-site residue. The shikimate site is built by Asn-87 and Asp-102. Residues 127–131 (GAGGS), 151–156 (NRTPER), and Leu-217 each bind NADP(+). Shikimate is bound at residue Tyr-219. NADP(+) is bound at residue Gly-241.

It belongs to the shikimate dehydrogenase family. As to quaternary structure, homodimer.

The catalysed reaction is shikimate + NADP(+) = 3-dehydroshikimate + NADPH + H(+). The protein operates within metabolic intermediate biosynthesis; chorismate biosynthesis; chorismate from D-erythrose 4-phosphate and phosphoenolpyruvate: step 4/7. Its function is as follows. Involved in the biosynthesis of the chorismate, which leads to the biosynthesis of aromatic amino acids. Catalyzes the reversible NADPH linked reduction of 3-dehydroshikimate (DHSA) to yield shikimate (SA). The protein is Shikimate dehydrogenase (NADP(+)) of Stenotrophomonas maltophilia (strain R551-3).